A 123-amino-acid polypeptide reads, in one-letter code: Large ribosomal subunit protein bL12 (123 aa).

This sequence belongs to the bacterial ribosomal protein bL12 family. In terms of assembly, homodimer. Part of the ribosomal stalk of the 50S ribosomal subunit. Forms a multimeric L10(L12)X complex, where L10 forms an elongated spine to which 2 to 4 L12 dimers bind in a sequential fashion. Binds GTP-bound translation factors.

In terms of biological role, forms part of the ribosomal stalk which helps the ribosome interact with GTP-bound translation factors. Is thus essential for accurate translation. This chain is Large ribosomal subunit protein bL12, found in Shewanella sp. (strain ANA-3).